The chain runs to 152 residues: Anaerobic nitrite reductase HBI (152 aa).

Residues Ala-2–Lys-151 enclose the Globin domain. Positions Glu-35–Glu-39 match the Homodimerization motif. Residues Ser-45, Lys-59, His-63, Arg-93, and His-98 each contribute to the heme b site. A Homodimerization motif is present at residues Asp-105–Gly-117.

It belongs to the plant globin family. As to quaternary structure, homodimer. Heme b serves as cofactor. In terms of tissue distribution, root nodules.

Its subcellular location is the cytoplasm. It is found in the nucleus. The catalysed reaction is Fe(III)-heme b-[protein] + nitric oxide + H2O = Fe(II)-heme b-[protein] + nitrite + 2 H(+). Phytoglobin that reduces nitrite to nitric oxide (NO) under anoxic conditions (e.g. during flooding or in waterlogged soil) and upon root nodulation. Required for general plant development and during nodulation, especially for the onset of symbiosis. Monitors nitric oxide (NO) levels during early phase of the nitrogen-fixing symbiosis and buffers oxygen in functioning nodules. May not function as an oxygen storage or transport protein. Has an unusually high affinity for O(2) through a hexacoordinate heme iron because of a very low dissociation constant. The sequence is that of Anaerobic nitrite reductase HBI from Casuarina glauca (Swamp oak).